Reading from the N-terminus, the 228-residue chain is Urease accessory protein UreF (228 aa).

The protein belongs to the UreF family. In terms of assembly, ureD, UreF and UreG form a complex that acts as a GTP-hydrolysis-dependent molecular chaperone, activating the urease apoprotein by helping to assemble the nickel containing metallocenter of UreC. The UreE protein probably delivers the nickel.

It is found in the cytoplasm. Functionally, required for maturation of urease via the functional incorporation of the urease nickel metallocenter. In Prochlorococcus marinus (strain MIT 9312), this protein is Urease accessory protein UreF.